Consider the following 238-residue polypeptide: 1-(5-phosphoribosyl)-5-[(5-phosphoribosylamino)methylideneamino] imidazole-4-carboxamide isomerase (238 aa).

D8 functions as the Proton acceptor in the catalytic mechanism. D129 functions as the Proton donor in the catalytic mechanism.

Belongs to the HisA/HisF family.

It localises to the cytoplasm. The catalysed reaction is 1-(5-phospho-beta-D-ribosyl)-5-[(5-phospho-beta-D-ribosylamino)methylideneamino]imidazole-4-carboxamide = 5-[(5-phospho-1-deoxy-D-ribulos-1-ylimino)methylamino]-1-(5-phospho-beta-D-ribosyl)imidazole-4-carboxamide. The protein operates within amino-acid biosynthesis; L-histidine biosynthesis; L-histidine from 5-phospho-alpha-D-ribose 1-diphosphate: step 4/9. In Paracoccus denitrificans (strain Pd 1222), this protein is 1-(5-phosphoribosyl)-5-[(5-phosphoribosylamino)methylideneamino] imidazole-4-carboxamide isomerase.